The following is a 677-amino-acid chain: NADPH--cytochrome P450 reductase (677 aa).

Glycine 2 carries the post-translational modification N-acetylglycine. The Lumenal portion of the chain corresponds to 2 to 21 (GDSHVDTSSTVSEAVAEEVS). A helical membrane pass occupies residues 22-42 (LFSMTDMILFSLIVGLLTYWF). Residues 43 to 677 (LFRKKKEEVP…KGRYSLDVWS (635 aa)) are Cytoplasmic-facing. Phosphoserine is present on serine 63. A Flavodoxin-like domain is found at 80-224 (IIVFYGSQTG…DFITWREQFW (145 aa)). Residues 86–91 (SQTGTA), 138–141 (ATYG), 173–182 (LGNKTYEHFN), and aspartate 208 each bind FMN. The region spanning 279–521 (KNPFLAAVTT…FVRKSQFRLP (243 aa)) is the FAD-binding FR-type domain. An NADP(+)-binding site is contributed by arginine 298. FAD-binding positions include arginine 424, 454–457 (RYYS), 472–474 (CAV), tyrosine 478, and 488–491 (GVAT). NADP(+) contacts are provided by residues threonine 535, 596-597 (SR), 602-606 (KVYVQ), and aspartate 638. Tryptophan 676 contributes to the FAD binding site.

This sequence belongs to the NADPH--cytochrome P450 reductase family. It in the N-terminal section; belongs to the flavodoxin family. The protein in the C-terminal section; belongs to the flavoprotein pyridine nucleotide cytochrome reductase family. FAD serves as cofactor. It depends on FMN as a cofactor.

Its subcellular location is the endoplasmic reticulum membrane. It carries out the reaction 2 oxidized [cytochrome P450] + NADPH = 2 reduced [cytochrome P450] + NADP(+) + H(+). Functionally, this enzyme is required for electron transfer from NADP to cytochrome P450 in microsomes. It can also provide electron transfer to heme oxygenase and cytochrome B5. The chain is NADPH--cytochrome P450 reductase from Homo sapiens (Human).